The chain runs to 633 residues: MAVASEALLQKLTESWKNSRFEELQREADEAAAEIEKMQKTSLDERKELSSKTKEFRKQPDEVKLGEMKGLLKLYQSGIDSLTKRAKSAEATFFRVYETLGEVPDPYPLLIEAANNLKTQKQIEDLKKEKEEMEGSLQGKEKLEREVENLRKELDKYKDLVETEAEKRAAITKEECEKSWLEQQKLYKDMEQENASTIQKLTSKIRELQASQLDHDLQASQNESAGLDVNAKSAEVNAILSELDDANKIIVELQAEIAVLKQNTKEQKSGSSQDDLSNQQKQQLDFMDSLNKKLSTELESIKEASRKEMETHCATIQTLENEVKEARKVKEESLTLANKFSDYDEIKRELSVLKQIEFSGEHATHENTSLESQLLKREKQLSEELAKLRSTNAQLTDRITQESKKASFLEQKASEQEEVIRKLEKDLADVDVEGSVYLSNTTYRREGTSGQLSPTSSIMGGNPSLFNGSVLSRNSVNETGSAIVDVIKQQRDRFRRANVTLVNQVSAANDKIALLESKLEEVEKSNTLLYEQMRFRDHYQKHVEPSSSHLQTAAAYENSISPFASFRKKEAERAYSRMGSFERIVYALLRTLLFSRATRGLFFMYLILLHLFIMIVLLKLGIAGNTAYTPMNY.

Residues 1-601 lie on the Cytoplasmic side of the membrane; it reads MAVASEALLQ…LLFSRATRGL (601 aa). Residues 39–60 are disordered; that stretch reads QKTSLDERKELSSKTKEFRKQP. Coiled coils occupy residues 111 to 339 and 369 to 433; these read IEAA…LANK and SLES…VDVE. The helical; Anchor for type IV membrane protein transmembrane segment at 602–622 threads the bilayer; that stretch reads FFMYLILLHLFIMIVLLKLGI. Residues 623 to 633 lie on the Lumenal side of the membrane; that stretch reads AGNTAYTPMNY.

This sequence belongs to the CASP family.

It localises to the golgi apparatus membrane. Functionally, may be involved in intra-Golgi transport. This is Protein CASP (coy1) from Schizosaccharomyces pombe (strain 972 / ATCC 24843) (Fission yeast).